We begin with the raw amino-acid sequence, 120 residues long: U13-lycotoxin-Ls1f (120 aa).

An N-terminal signal peptide occupies residues 1–19 (MKILFVLISILYAVYRFSS). A propeptide spanning residues 20–54 (EEDVDSAYLANELEPVEDINSEQYAALEPKEEQER) is cleaved from the precursor. 4 disulfides stabilise this stretch: cysteine 56-cysteine 70, cysteine 63-cysteine 76, cysteine 69-cysteine 87, and cysteine 78-cysteine 85. Positions 56–95 (CAGMGQDCKDDCDCCLNIATCNCWFGRYFCSCTFGDYQTC) constitute an Agouti domain.

This sequence belongs to the neurotoxin 05 (agouti) family. Post-translationally, contains 6 disulfide bonds. In terms of tissue distribution, expressed by the venom gland.

It is found in the secreted. The protein is U13-lycotoxin-Ls1f of Lycosa singoriensis (Wolf spider).